Consider the following 867-residue polypeptide: Protein translocase subunit SecA (867 aa).

ATP-binding positions include Gln-86, Gly-104–Thr-108, and Asp-499. Cys-848, Cys-850, Cys-859, and His-860 together coordinate Zn(2+).

The protein belongs to the SecA family. Monomer and homodimer. Part of the essential Sec protein translocation apparatus which comprises SecA, SecYEG and auxiliary proteins SecDF-YajC and YidC. It depends on Zn(2+) as a cofactor.

It localises to the cell membrane. Its subcellular location is the cytoplasm. It catalyses the reaction ATP + H2O + cellular proteinSide 1 = ADP + phosphate + cellular proteinSide 2.. In terms of biological role, part of the Sec protein translocase complex. Interacts with the SecYEG preprotein conducting channel. Has a central role in coupling the hydrolysis of ATP to the transfer of proteins into and across the cell membrane, serving both as a receptor for the preprotein-SecB complex and as an ATP-driven molecular motor driving the stepwise translocation of polypeptide chains across the membrane. This is Protein translocase subunit SecA from Wolbachia sp. subsp. Brugia malayi (strain TRS).